The primary structure comprises 170 residues: Crossover junction endodeoxyribonuclease RuvC (170 aa).

Catalysis depends on residues Asp-9, Glu-70, and Asp-145. Positions 9, 70, and 145 each coordinate Mg(2+).

The protein belongs to the RuvC family. As to quaternary structure, homodimer which binds Holliday junction (HJ) DNA. The HJ becomes 2-fold symmetrical on binding to RuvC with unstacked arms; it has a different conformation from HJ DNA in complex with RuvA. In the full resolvosome a probable DNA-RuvA(4)-RuvB(12)-RuvC(2) complex forms which resolves the HJ. Mg(2+) is required as a cofactor.

It localises to the cytoplasm. The catalysed reaction is Endonucleolytic cleavage at a junction such as a reciprocal single-stranded crossover between two homologous DNA duplexes (Holliday junction).. Its function is as follows. The RuvA-RuvB-RuvC complex processes Holliday junction (HJ) DNA during genetic recombination and DNA repair. Endonuclease that resolves HJ intermediates. Cleaves cruciform DNA by making single-stranded nicks across the HJ at symmetrical positions within the homologous arms, yielding a 5'-phosphate and a 3'-hydroxyl group; requires a central core of homology in the junction. The consensus cleavage sequence is 5'-(A/T)TT(C/G)-3'. Cleavage occurs on the 3'-side of the TT dinucleotide at the point of strand exchange. HJ branch migration catalyzed by RuvA-RuvB allows RuvC to scan DNA until it finds its consensus sequence, where it cleaves and resolves the cruciform DNA. This Chlamydia trachomatis serovar L2 (strain ATCC VR-902B / DSM 19102 / 434/Bu) protein is Crossover junction endodeoxyribonuclease RuvC.